The sequence spans 783 residues: Polyribonucleotide nucleotidyltransferase 1, mitochondrial (783 aa).

A mitochondrion-targeting transit peptide spans 1–45 (MAACRLCCLCPCLRPLGCGPLGRPGRNRALSYLQMRALWSSTGSR). 3 positions are modified to N6-acetyllysine: K250, K264, and K285. The residue at position 552 (K552) is an N6-succinyllysine. One can recognise a KH domain in the interval 605–664 (PVVETVKVPLSKRAKFVGPGGYHLKKLQAETGVTISQVDEETFSIFAPTPTAMHEARDFI). In terms of domain architecture, S1 motif spans 679–750 (GAVYTATITE…ADGRMRLSRK (72 aa)). The residue at position 754 (S754) is a Phosphoserine.

This sequence belongs to the polyribonucleotide nucleotidyltransferase family. As to quaternary structure, homotrimer; in free form. Homooligomer. Component of the mitochondrial degradosome (mtEXO) complex which is a heteropentamer containing 2 copies of SUPV3L1 and 3 copies of PNPT1. As part of the mitochondrial degradosome complex, interacts with GRSF1 in an RNA-dependent manner; the interaction enhances the activity of the complex. Interacts with TCL1A; the interaction has no effect on PNPT1 exonuclease activity.

Its subcellular location is the cytoplasm. It localises to the mitochondrion matrix. It is found in the mitochondrion intermembrane space. It catalyses the reaction RNA(n+1) + phosphate = RNA(n) + a ribonucleoside 5'-diphosphate. In terms of biological role, RNA-binding protein implicated in numerous RNA metabolic processes. Catalyzes the phosphorolysis of single-stranded polyribonucleotides processively in the 3'-to-5' direction. Mitochondrial intermembrane factor with RNA-processing exoribonulease activity. Component of the mitochondrial degradosome (mtEXO) complex, that degrades 3' overhang double-stranded RNA with a 3'-to-5' directionality in an ATP-dependent manner. Involved in the degradation of non-coding mitochondrial transcripts (MT-ncRNA) and tRNA-like molecules. Required for correct processing and polyadenylation of mitochondrial mRNAs. Plays a role as a cytoplasmic RNA import factor that mediates the translocation of small RNA components, like the 5S RNA, the RNA subunit of ribonuclease P and the mitochondrial RNA-processing (MRP) RNA, into the mitochondrial matrix. Plays a role in mitochondrial morphogenesis and respiration; regulates the expression of the electron transport chain (ETC) components at the mRNA and protein levels. In the cytoplasm, shows a 3'-to-5' exoribonuclease mediating mRNA degradation activity; degrades c-myc mRNA upon treatment with IFNB1/IFN-beta, resulting in a growth arrest in melanoma cells. Regulates the stability of specific mature miRNAs in melanoma cells; specifically and selectively degrades miR-221, preferentially. Also plays a role in RNA cell surveillance by cleaning up oxidized RNAs. Binds to the RNA subunit of ribonuclease P, MRP RNA and miR-221 microRNA. The polypeptide is Polyribonucleotide nucleotidyltransferase 1, mitochondrial (Pnpt1) (Mus musculus (Mouse)).